Consider the following 202-residue polypeptide: Holliday junction branch migration complex subunit RuvA (202 aa).

Positions Met-1–Leu-64 are domain I. Positions Thr-65 to Ile-146 are domain II. The flexible linker stretch occupies residues Lys-147–Met-155. The tract at residues Met-155–Lys-202 is domain III.

This sequence belongs to the RuvA family. As to quaternary structure, homotetramer. Forms an RuvA(8)-RuvB(12)-Holliday junction (HJ) complex. HJ DNA is sandwiched between 2 RuvA tetramers; dsDNA enters through RuvA and exits via RuvB. An RuvB hexamer assembles on each DNA strand where it exits the tetramer. Each RuvB hexamer is contacted by two RuvA subunits (via domain III) on 2 adjacent RuvB subunits; this complex drives branch migration. In the full resolvosome a probable DNA-RuvA(4)-RuvB(12)-RuvC(2) complex forms which resolves the HJ.

The protein resides in the cytoplasm. In terms of biological role, the RuvA-RuvB-RuvC complex processes Holliday junction (HJ) DNA during genetic recombination and DNA repair, while the RuvA-RuvB complex plays an important role in the rescue of blocked DNA replication forks via replication fork reversal (RFR). RuvA specifically binds to HJ cruciform DNA, conferring on it an open structure. The RuvB hexamer acts as an ATP-dependent pump, pulling dsDNA into and through the RuvAB complex. HJ branch migration allows RuvC to scan DNA until it finds its consensus sequence, where it cleaves and resolves the cruciform DNA. This Elusimicrobium minutum (strain Pei191) protein is Holliday junction branch migration complex subunit RuvA.